The primary structure comprises 106 residues: Cell division protein FtsB (106 aa).

Residues 1 to 3 (MRL) lie on the Cytoplasmic side of the membrane. The helical transmembrane segment at 4–21 (LTLIFVALIALLQYPLWL) threads the bilayer. The Periplasmic portion of the chain corresponds to 22-106 (GKGSWLRVWD…SPPAALTGAQ (85 aa)). The stretch at 31 to 73 (DLNQKIVAQKAVNAELKLRNDTLDAEVRDLKQGNAAIEERARS) forms a coiled coil.

It belongs to the FtsB family. Part of a complex composed of FtsB, FtsL and FtsQ.

Its subcellular location is the cell inner membrane. Essential cell division protein. May link together the upstream cell division proteins, which are predominantly cytoplasmic, with the downstream cell division proteins, which are predominantly periplasmic. This Methylobacillus flagellatus (strain ATCC 51484 / DSM 6875 / VKM B-1610 / KT) protein is Cell division protein FtsB.